The following is a 366-amino-acid chain: Protein FAM131A (366 aa).

Residues 342–366 (QRQASDLASSGVVSLDEDEAEPEEQ) form a disordered region. The segment covering 356–366 (LDEDEAEPEEQ) has biased composition (acidic residues).

It belongs to the FAM131 family.

The polypeptide is Protein FAM131A (FAM131A) (Homo sapiens (Human)).